Consider the following 190-residue polypeptide: Ribosome maturation factor RimM (190 aa).

Residues 114–190 (DDEYYWVDLI…CITVDWQPDY (77 aa)) form the PRC barrel domain.

It belongs to the RimM family. Binds ribosomal protein uS19.

It is found in the cytoplasm. In terms of biological role, an accessory protein needed during the final step in the assembly of 30S ribosomal subunit, possibly for assembly of the head region. Essential for efficient processing of 16S rRNA. May be needed both before and after RbfA during the maturation of 16S rRNA. It has affinity for free ribosomal 30S subunits but not for 70S ribosomes. This Acidovorax sp. (strain JS42) protein is Ribosome maturation factor RimM.